Reading from the N-terminus, the 170-residue chain is Mitochondrial fission 1 protein A (170 aa).

The TPR repeat unit spans residues 90-123; that stretch reads REKLYLLAVGYYRSGNYSRSRQLVDRCIEMQADW. The helical transmembrane segment at 142-162 threads the bilayer; that stretch reads VIGIGITATAFGAVGLIAGGI.

It belongs to the FIS1 family. In terms of assembly, interacts with ARC5.

It localises to the mitochondrion outer membrane. The protein localises to the peroxisome membrane. Functionally, component of the peroxisomal and mitochondrial division machineries. Plays a role in promoting the fission of mitochondria and peroxisomes. The protein is Mitochondrial fission 1 protein A (FIS1A) of Arabidopsis thaliana (Mouse-ear cress).